The chain runs to 162 residues: 6,7-dimethyl-8-ribityllumazine synthase (162 aa).

Residues Tyr27, 58-60 (ALE), and 87-89 (CVI) contribute to the 5-amino-6-(D-ribitylamino)uracil site. 92 to 93 (ET) contacts (2S)-2-hydroxy-3-oxobutyl phosphate. The Proton donor role is filled by His95. Asn120 lines the 5-amino-6-(D-ribitylamino)uracil pocket. Position 134 (Arg134) interacts with (2S)-2-hydroxy-3-oxobutyl phosphate.

Belongs to the DMRL synthase family.

The catalysed reaction is (2S)-2-hydroxy-3-oxobutyl phosphate + 5-amino-6-(D-ribitylamino)uracil = 6,7-dimethyl-8-(1-D-ribityl)lumazine + phosphate + 2 H2O + H(+). It functions in the pathway cofactor biosynthesis; riboflavin biosynthesis; riboflavin from 2-hydroxy-3-oxobutyl phosphate and 5-amino-6-(D-ribitylamino)uracil: step 1/2. In terms of biological role, catalyzes the formation of 6,7-dimethyl-8-ribityllumazine by condensation of 5-amino-6-(D-ribitylamino)uracil with 3,4-dihydroxy-2-butanone 4-phosphate. This is the penultimate step in the biosynthesis of riboflavin. The chain is 6,7-dimethyl-8-ribityllumazine synthase from Azorhizobium caulinodans (strain ATCC 43989 / DSM 5975 / JCM 20966 / LMG 6465 / NBRC 14845 / NCIMB 13405 / ORS 571).